Consider the following 320-residue polypeptide: Phospho-N-acetylmuramoyl-pentapeptide-transferase (320 aa).

Transmembrane regions (helical) follow at residues 5–25 (LWAL…LIKF), 51–71 (MGGL…GAAY), 76–96 (GVVA…IGGI), 124–144 (VVIM…IPMI), 145–165 (GTIN…VGWS), 176–196 (GLLA…AMHM), 198–218 (NHII…FLIF), 233–255 (LALG…LIWF), and 298–318 (WQID…GIFY).

The protein belongs to the glycosyltransferase 4 family. MraY subfamily. Mg(2+) is required as a cofactor.

It localises to the cell membrane. The enzyme catalyses UDP-N-acetyl-alpha-D-muramoyl-L-alanyl-gamma-D-glutamyl-L-lysyl-D-alanyl-D-alanine + di-trans,octa-cis-undecaprenyl phosphate = Mur2Ac(oyl-L-Ala-gamma-D-Glu-L-Lys-D-Ala-D-Ala)-di-trans,octa-cis-undecaprenyl diphosphate + UMP. The protein operates within cell wall biogenesis; peptidoglycan biosynthesis. Functionally, catalyzes the initial step of the lipid cycle reactions in the biosynthesis of the cell wall peptidoglycan: transfers peptidoglycan precursor phospho-MurNAc-pentapeptide from UDP-MurNAc-pentapeptide onto the lipid carrier undecaprenyl phosphate, yielding undecaprenyl-pyrophosphoryl-MurNAc-pentapeptide, known as lipid I. This is Phospho-N-acetylmuramoyl-pentapeptide-transferase from Leuconostoc citreum (strain KM20).